The following is a 117-amino-acid chain: Movement protein TGB2 (117 aa).

The Cytoplasmic portion of the chain corresponds to 1–11 (MPLIPPPNPQK). The chain crosses the membrane as a helical span at residues 12–32 (TYQIAVLALGLVLLLAFVLIS). Residues 33 to 78 (DHSPKVGDHLHNLPFGGEYKDGTKTIKYFQRPNQHSLSKTLAKSHN) lie on the Lumenal side of the membrane. A helical membrane pass occupies residues 79–99 (TTIFLIILGLIGTLHGLHYFS). Over 100–117 (NNRRISSSLHCVLCQNKH) the chain is Cytoplasmic.

It belongs to the Tymovirales TGBp2 protein family.

It localises to the host endoplasmic reticulum membrane. Functionally, plays a role in viral cell-to-cell propagation, by facilitating genome transport to neighboring plant cells through plasmosdesmata,. In Trifolium (WCMV), this protein is Movement protein TGB2.